The sequence spans 128 residues: Otoraplin (128 aa).

The first 17 residues, methionine 1 to alanine 17, serve as a signal peptide directing secretion. 2 disulfide bridges follow: cysteine 32–cysteine 37 and cysteine 55–cysteine 127. An SH3 domain is found at tyrosine 39–valine 110.

Belongs to the MIA/OTOR family. As to expression, highly expressed in cochlea.

Its subcellular location is the secreted. The protein is Otoraplin (OTOR) of Homo sapiens (Human).